The sequence spans 425 residues: Dihydroorotase (425 aa).

Positions 60 and 62 each coordinate Zn(2+). Substrate is bound by residues 62-64 and Asn94; that span reads HLR. 3 residues coordinate Zn(2+): Asp152, His179, and His232. Residue Asn278 participates in substrate binding. Zn(2+) is bound at residue Asp305. Asp305 is a catalytic residue. Residue His309 participates in substrate binding.

It belongs to the metallo-dependent hydrolases superfamily. DHOase family. Class I DHOase subfamily. Requires Zn(2+) as cofactor.

It carries out the reaction (S)-dihydroorotate + H2O = N-carbamoyl-L-aspartate + H(+). Its pathway is pyrimidine metabolism; UMP biosynthesis via de novo pathway; (S)-dihydroorotate from bicarbonate: step 3/3. Its function is as follows. Catalyzes the reversible cyclization of carbamoyl aspartate to dihydroorotate. This Syntrophotalea carbinolica (strain DSM 2380 / NBRC 103641 / GraBd1) (Pelobacter carbinolicus) protein is Dihydroorotase.